The chain runs to 394 residues: Obg-like ATPase 1 (394 aa).

The OBG-type G domain maps to 25–282 (LKIGIVGLPN…MPPDEAAKYC (258 aa)). ATP contacts are provided by residues 34 to 39 (NVGKST), 56 to 60 (FCTID), and 94 to 97 (DIAG). GTP is bound at residue 34-39 (NVGKST). Positions 38 and 58 each coordinate Mg(2+). Residues Phe-129 and Asn-230 each coordinate GTP. ATP is bound by residues 230–231 (NM), Met-231, and 263–265 (SCA). Position 263 to 265 (263 to 265 (SCA)) interacts with GTP. The TGS domain occupies 303 to 386 (HLIYFFTAGP…QDGDIIFFKF (84 aa)).

The protein belongs to the TRAFAC class OBG-HflX-like GTPase superfamily. OBG GTPase family. YchF/OLA1 subfamily. In terms of assembly, monomer (Potential). Interacts with GAP1. Mg(2+) is required as a cofactor.

Its subcellular location is the cell membrane. The protein localises to the cytoplasm. The protein resides in the cytosol. Activated by GAP1. Its function is as follows. Hydrolyzes ATP, and can also hydrolyze GTP with lower efficiency. Has lower affinity for GTP (Potential). Exhibits GTPase activity. Exhibits similar binding affinities and hydrolytic activities toward both GTP and ATP. Binds to the 26 S ribosomal RNA in vitro, but not to the 5.8 S or 18 S rRNA. Confers sensitivity to salinity stress by suppressing the anti-oxidation enzymatic activities and increasing lipid peroxidation thus leading to the accumulation of reactive oxygen species (ROS). This Oryza sativa subsp. japonica (Rice) protein is Obg-like ATPase 1.